The sequence spans 292 residues: Ribosomal protein L11 methyltransferase (292 aa).

Positions 144, 165, 187, and 229 each coordinate S-adenosyl-L-methionine.

The protein belongs to the methyltransferase superfamily. PrmA family.

The protein localises to the cytoplasm. It catalyses the reaction L-lysyl-[protein] + 3 S-adenosyl-L-methionine = N(6),N(6),N(6)-trimethyl-L-lysyl-[protein] + 3 S-adenosyl-L-homocysteine + 3 H(+). Functionally, methylates ribosomal protein L11. In Pseudomonas savastanoi pv. phaseolicola (strain 1448A / Race 6) (Pseudomonas syringae pv. phaseolicola (strain 1448A / Race 6)), this protein is Ribosomal protein L11 methyltransferase.